Reading from the N-terminus, the 70-residue chain is Small ribosomal subunit protein bS21C (70 aa).

Residues 38-70 (YEKPTTERKRKKAAAVARLRKQVRRSMPPKKKY) are disordered. Basic residues predominate over residues 45–70 (RKRKKAAAVARLRKQVRRSMPPKKKY).

Belongs to the bacterial ribosomal protein bS21 family.

This chain is Small ribosomal subunit protein bS21C, found in Burkholderia thailandensis (strain ATCC 700388 / DSM 13276 / CCUG 48851 / CIP 106301 / E264).